The chain runs to 483 residues: Bifunctional pantoate ligase/cytidylate kinase (483 aa).

The interval 1-246 (MPTMGALHAG…CGSTRLIDHA (246 aa)) is pantoate--beta-alanine ligase. 4–11 (MGALHAGH) serves as a coordination point for ATP. Catalysis depends on histidine 11, which acts as the Proton donor. Glutamine 34 provides a ligand contact to (R)-pantoate. Glutamine 34 is a binding site for beta-alanine. 124–127 (GEKD) serves as a coordination point for ATP. Glutamine 130 is a (R)-pantoate binding site. Residues valine 153 and 161–164 (LSSR) each bind ATP. Residues 247–483 (FLMTRQPLVA…AEEAWPTPQR (237 aa)) form a cytidylate kinase region.

In the N-terminal section; belongs to the pantothenate synthetase family. It in the C-terminal section; belongs to the cytidylate kinase family. Type 1 subfamily.

It localises to the cytoplasm. The enzyme catalyses (R)-pantoate + beta-alanine + ATP = (R)-pantothenate + AMP + diphosphate + H(+). The catalysed reaction is CMP + ATP = CDP + ADP. It catalyses the reaction dCMP + ATP = dCDP + ADP. The protein operates within cofactor biosynthesis; (R)-pantothenate biosynthesis; (R)-pantothenate from (R)-pantoate and beta-alanine: step 1/1. Catalyzes the condensation of pantoate with beta-alanine in an ATP-dependent reaction via a pantoyl-adenylate intermediate. In terms of biological role, catalyzes the transfer of a phosphate group from ATP to either CMP or dCMP to form CDP or dCDP and ADP, respectively. This is Bifunctional pantoate ligase/cytidylate kinase from Synechococcus sp. (strain CC9902).